The following is a 368-amino-acid chain: Protein NDRG2 (368 aa).

A compositionally biased stretch (low complexity) spans 330 to 339; the sequence is SLSSSYSMEG. Residues 330–368 are disordered; it reads SLSSSYSMEGSRSRSRTLSQGSQGGQLPPSPSNTMEVSC.

It belongs to the NDRG family.

It localises to the cytoplasm. In terms of biological role, contributes to the regulation of the Wnt signaling pathway. Down-regulates CTNNB1-mediated transcriptional activation of target genes. May be involved in neuron differentiation. In Danio rerio (Zebrafish), this protein is Protein NDRG2 (ndrg2).